The chain runs to 491 residues: Dipeptide and tripeptide permease B (491 aa).

The Cytoplasmic segment spans residues 1–26 (MNNTAPGLLHQPKPFFMIFFVELWER). The chain crosses the membrane as a helical span at residues 27-47 (FGYYGVQGILAVFFVKQLGFS). The Periplasmic segment spans residues 48–51 (QEQA). The chain crosses the membrane as a helical span at residues 52-72 (FITFGAFAALVYGLISIGGYV). At 73–81 (GDHLLGTKR) the chain is on the cytoplasmic side. Residues 82–102 (TMVLGAIVLALGYFMTGMSLL) traverse the membrane as a helical segment. Residues 103–105 (KPE) are Periplasmic-facing. Residues 106–126 (MIFIALGTIAVGNGLFKANPA) form a helical membrane-spanning segment. The Cytoplasmic segment spans residues 127–145 (SLLSKCYPPKDPRLDGAFT). Residues 146-166 (LFYMSINIGSLLSLSLAPIIA) form a helical membrane-spanning segment. The Periplasmic segment spans residues 167–171 (ERFGY). The helical transmembrane segment at 172–192 (AVTYNLCGLGLIIALLVYFAC) threads the bilayer. Residues 193-210 (RGMVRSIGSAPDHQPLNY) lie on the Cytoplasmic side of the membrane. Residues 211-231 (GKLLLVLAGAVVMIFLCAWLM) form a helical membrane-spanning segment. Position 232 (His-232) is a topological domain, periplasmic. The helical transmembrane segment at 233 to 253 (NVGVANIVLIAVSAVVLYFFF) threads the bilayer. At 254 to 266 (REAFKQDKTGRNR) the chain is on the cytoplasmic side. Residues 267 to 287 (MFVAFILMIEAVLFYILYAQM) form a helical membrane-spanning segment. Residues 288-312 (PTSLNFFAINNVRHELLGFAINPVS) lie on the Periplasmic side of the membrane. A helical transmembrane segment spans residues 313 to 335 (FQALNPFWVVVASPILASIYTRL). At 336–349 (GSRGRDMTMPTKFT) the chain is on the cytoplasmic side. The helical transmembrane segment at 350-370 (LGMLLCSLGFLTAAAAGMWFA) threads the bilayer. Topologically, residues 371-378 (DAQGLTSP) are periplasmic. Residues 379–399 (WFVVLVYLFQSLGELMISALG) form a helical membrane-spanning segment. Topologically, residues 400–423 (LAMVAALVPQYLMGFILGMWFLTQ) are cytoplasmic. Residues 424-444 (AAAFLLGGYVATFTAVPAGIH) form a helical membrane-spanning segment. Over 445 to 454 (DPLQTLPIYT) the chain is Periplasmic. The helical transmembrane segment at 455-475 (GVFGKIGIATLIVTLVMAAMV) threads the bilayer. Residues 476–491 (PWLNRMMNTPADGQKA) are Cytoplasmic-facing.

Belongs to the major facilitator superfamily. Proton-dependent oligopeptide transporter (POT/PTR) (TC 2.A.17) family. DtpB subfamily.

It is found in the cell inner membrane. Its function is as follows. Proton-dependent permease that transports di- and tripeptides. The sequence is that of Dipeptide and tripeptide permease B from Edwardsiella piscicida.